The primary structure comprises 378 residues: Signal recognition particle receptor FtsY (378 aa).

Residues 184–191 (GVNGTGKT), 266–270 (DTAGR), and 330–333 (TKLD) contribute to the GTP site.

Belongs to the GTP-binding SRP family. FtsY subfamily. Part of the signal recognition particle protein translocation system, which is composed of SRP and FtsY. SRP is a ribonucleoprotein composed of Ffh and a 4.5S RNA molecule.

The protein resides in the cell membrane. Its subcellular location is the cytoplasm. The catalysed reaction is GTP + H2O = GDP + phosphate + H(+). Functionally, involved in targeting and insertion of nascent membrane proteins into the cytoplasmic membrane. Acts as a receptor for the complex formed by the signal recognition particle (SRP) and the ribosome-nascent chain (RNC). Interaction with SRP-RNC leads to the transfer of the RNC complex to the Sec translocase for insertion into the membrane, the hydrolysis of GTP by both Ffh and FtsY, and the dissociation of the SRP-FtsY complex into the individual components. The sequence is that of Signal recognition particle receptor FtsY from Buchnera aphidicola subsp. Acyrthosiphon pisum (strain APS) (Acyrthosiphon pisum symbiotic bacterium).